The following is a 198-amino-acid chain: Recombination protein RecR (198 aa).

Residues 57 to 72 form a C4-type zinc finger; that stretch reads CSVCGHITDQDPCYIC. Positions 80-175 constitute a Toprim domain; sequence SVICVVQDPK…KLSRIAHGLP (96 aa).

It belongs to the RecR family.

May play a role in DNA repair. It seems to be involved in an RecBC-independent recombinational process of DNA repair. It may act with RecF and RecO. This Bacillus subtilis (strain 168) protein is Recombination protein RecR.